The primary structure comprises 332 residues: DnAJ-like protein slr0093 (332 aa).

Residues 6-75 (FKDYYQILGV…RQKYDQFGRY (70 aa)) enclose the J domain.

The sequence is that of DnAJ-like protein slr0093 from Synechocystis sp. (strain ATCC 27184 / PCC 6803 / Kazusa).